An 80-amino-acid polypeptide reads, in one-letter code: Raniseptin-7 (80 aa).

The N-terminal stretch at 1 to 22 is a signal peptide; it reads MAFLKKSLFLVLFLGIVSLSIC. Residues 23–49 constitute a propeptide that is removed on maturation; it reads EEEKREGEEEEKQEEENEELSEEELRE. A disordered region spans residues 27–46; it reads REGEEEEKQEEENEELSEEE. The span at 30–44 shows a compositional bias: acidic residues; sequence EEEEKQEEENEELSE.

It belongs to the frog skin active peptide (FSAP) family. Dermaseptin subfamily. In terms of tissue distribution, expressed by the skin glands.

It is found in the secreted. Its function is as follows. Has antibacterial activity. This Boana raniceps (Chaco tree frog) protein is Raniseptin-7.